A 218-amino-acid polypeptide reads, in one-letter code: Pyridoxine/pyridoxamine 5'-phosphate oxidase (218 aa).

Residues 12–15 (RLAY) and R70 each bind substrate. FMN is bound by residues 65-70 (RTVLLR), 80-81 (YT), K87, and Q109. 3 residues coordinate substrate: Y127, R131, and S135. Residues 145 to 146 (QS) and W191 each bind FMN. 197–199 (RLH) is a binding site for substrate. R201 serves as a coordination point for FMN.

This sequence belongs to the pyridoxamine 5'-phosphate oxidase family. As to quaternary structure, homodimer. Requires FMN as cofactor.

It carries out the reaction pyridoxamine 5'-phosphate + O2 + H2O = pyridoxal 5'-phosphate + H2O2 + NH4(+). The enzyme catalyses pyridoxine 5'-phosphate + O2 = pyridoxal 5'-phosphate + H2O2. Its pathway is cofactor metabolism; pyridoxal 5'-phosphate salvage; pyridoxal 5'-phosphate from pyridoxamine 5'-phosphate: step 1/1. The protein operates within cofactor metabolism; pyridoxal 5'-phosphate salvage; pyridoxal 5'-phosphate from pyridoxine 5'-phosphate: step 1/1. Functionally, catalyzes the oxidation of either pyridoxine 5'-phosphate (PNP) or pyridoxamine 5'-phosphate (PMP) into pyridoxal 5'-phosphate (PLP). This chain is Pyridoxine/pyridoxamine 5'-phosphate oxidase, found in Deinococcus geothermalis (strain DSM 11300 / CIP 105573 / AG-3a).